We begin with the raw amino-acid sequence, 444 residues long: Proline--tRNA ligase (444 aa).

This sequence belongs to the class-II aminoacyl-tRNA synthetase family. ProS type 2 subfamily. In terms of assembly, homodimer.

The protein localises to the cytoplasm. It catalyses the reaction tRNA(Pro) + L-proline + ATP = L-prolyl-tRNA(Pro) + AMP + diphosphate. Its function is as follows. Catalyzes the attachment of proline to tRNA(Pro) in a two-step reaction: proline is first activated by ATP to form Pro-AMP and then transferred to the acceptor end of tRNA(Pro). The chain is Proline--tRNA ligase from Methylobacterium sp. (strain 4-46).